The following is a 352-amino-acid chain: B1 bradykinin receptor (352 aa).

Residues M1 to T41 are Extracellular-facing. Residues N13 and N21 are each glycosylated (N-linked (GlcNAc...) asparagine). The helical transmembrane segment at F42 to L62 threads the bilayer. The Cytoplasmic segment spans residues L63–E72. A helical transmembrane segment spans residues I73–A93. The Extracellular segment spans residues E94–R110. C109 and C188 form a disulfide bridge. A helical membrane pass occupies residues V111–S131. Topologically, residues Q132–A153 are cytoplasmic. The helical transmembrane segment at R154–L174 threads the bilayer. Residues R175–N206 lie on the Extracellular side of the membrane. N184 is a glycosylation site (N-linked (GlcNAc...) asparagine). A helical transmembrane segment spans residues I207–S227. Over L228 to L250 the chain is Cytoplasmic. The chain crosses the membrane as a helical span at residues I251–L271. Topologically, residues E272 to Q294 are extracellular. A helical transmembrane segment spans residues L295–G315. Over R316 to N352 the chain is Cytoplasmic. A lipid anchor (S-palmitoyl cysteine) is attached at C329.

It belongs to the G-protein coupled receptor 1 family. Bradykinin receptor subfamily. BDKRB1 sub-subfamily.

It localises to the cell membrane. In terms of biological role, this is a receptor for bradykinin. Could be a factor in chronic pain and inflammation. The protein is B1 bradykinin receptor (BDKRB1) of Macaca fascicularis (Crab-eating macaque).